The sequence spans 215 residues: NADH-quinone oxidoreductase subunit C (215 aa).

Belongs to the complex I 30 kDa subunit family. NDH-1 is composed of 14 different subunits. Subunits NuoB, C, D, E, F, and G constitute the peripheral sector of the complex.

The protein resides in the cell inner membrane. The enzyme catalyses a quinone + NADH + 5 H(+)(in) = a quinol + NAD(+) + 4 H(+)(out). Its function is as follows. NDH-1 shuttles electrons from NADH, via FMN and iron-sulfur (Fe-S) centers, to quinones in the respiratory chain. The immediate electron acceptor for the enzyme in this species is believed to be ubiquinone. Couples the redox reaction to proton translocation (for every two electrons transferred, four hydrogen ions are translocated across the cytoplasmic membrane), and thus conserves the redox energy in a proton gradient. The protein is NADH-quinone oxidoreductase subunit C of Bordetella parapertussis (strain 12822 / ATCC BAA-587 / NCTC 13253).